A 966-amino-acid chain; its full sequence is Regulator of G-protein signaling 3 (966 aa).

A PDZ domain is found at 18 to 95 (QITIRRGKDG…EIILLVWRVV (78 aa)). The interval 115–135 (THDLLSPPNKREKNCTHGAPV) is disordered. Omega-N-methylarginine is present on Arg167. Disordered regions lie at residues 403 to 618 (EADE…TGAV) and 637 to 704 (YSQL…RVQN). 2 stretches are compositionally biased toward polar residues: residues 527 to 548 (PETS…TELP) and 576 to 594 (SSAS…SSLG). Residues 649-675 (GEDEDAEEGEEGGEGEEDEEDDTSDDN) are compositionally biased toward acidic residues. The span at 676 to 686 (YGDRSEAKRSS) shows a compositional bias: basic and acidic residues. Phosphoserine is present on residues Ser712, Ser715, Ser747, and Ser776. The interval 806-830 (FRRRNESPGAQPASKTDKTTKSFKP) is disordered. Positions 820–830 (KTDKTTKSFKP) are enriched in basic and acidic residues. The RGS domain occupies 841 to 966 (SLEKLLLHKY…INQKKMSPPL (126 aa)).

As to quaternary structure, binds the GNB1-GNG2 heterodimer. Binds EFNB1 and EFNB2. Post-translationally, phosphorylated by cyclic GMP-dependent protein kinase. ISGylated. In terms of tissue distribution, detected in embryos from E8.5-16.5 in cortical ventricular zone, dorsal root ganglia and cerebellar primordia. Isoform 3 is detected in testis and in spermatocytes from newborn mice. Levels increase and reach a maximum after 21 days; after this they decrease again. Long isoforms are widely expressed.

The protein localises to the cytoplasm. Its subcellular location is the cell membrane. It localises to the nucleus. Functionally, down-regulates signaling from heterotrimeric G-proteins by increasing the GTPase activity of the alpha subunits, thereby driving them into their inactive GDP-bound form. Down-regulates G-protein-mediated release of inositol phosphates and activation of MAP kinases. In Mus musculus (Mouse), this protein is Regulator of G-protein signaling 3 (Rgs3).